Consider the following 310-residue polypeptide: tRNA dimethylallyltransferase (310 aa).

13–20 contacts ATP; it reads GPTASGKT. Substrate is bound at residue 15-20; sequence TASGKT. 4 interaction with substrate tRNA regions span residues 38-41, 162-166, 243-248, and 276-283; these read DSAL, QRLSR, RCVGYR, and KRQITWLR.

The protein belongs to the IPP transferase family. As to quaternary structure, monomer. Requires Mg(2+) as cofactor.

The catalysed reaction is adenosine(37) in tRNA + dimethylallyl diphosphate = N(6)-dimethylallyladenosine(37) in tRNA + diphosphate. In terms of biological role, catalyzes the transfer of a dimethylallyl group onto the adenine at position 37 in tRNAs that read codons beginning with uridine, leading to the formation of N6-(dimethylallyl)adenosine (i(6)A). This chain is tRNA dimethylallyltransferase, found in Aliivibrio fischeri (strain MJ11) (Vibrio fischeri).